Reading from the N-terminus, the 607-residue chain is Glucose-6-phosphate isomerase, glycosomal (607 aa).

The Proton donor role is filled by Glu411. Active-site residues include His442 and Lys571. The Microbody targeting signal signature appears at 605–607 (SHL).

This sequence belongs to the GPI family. In terms of assembly, homodimer.

It is found in the glycosome. The catalysed reaction is alpha-D-glucose 6-phosphate = beta-D-fructose 6-phosphate. Its pathway is carbohydrate degradation; glycolysis; D-glyceraldehyde 3-phosphate and glycerone phosphate from D-glucose: step 2/4. This Trypanosoma brucei brucei protein is Glucose-6-phosphate isomerase, glycosomal (PGI).